The following is a 306-amino-acid chain: Tyrosine--tRNA ligase (306 aa).

Tyr-32 and Glu-36 together coordinate L-tyrosine. The 'HIGH' region motif lies at 37–45; sequence PSGKIHLGH. Residues 151 to 158 form a tyrosine region; the sequence is YPIMQVND. Gln-173 is a binding site for L-tyrosine. Positions 204–208 match the 'KMSKS' region motif; it reads KMSSS. Position 207 (Ser-207) interacts with ATP. Interaction with t-RNA stretches follow at residues 228–231 and 283–288; these read KAYC and HPMDLK.

It belongs to the class-I aminoacyl-tRNA synthetase family. TyrS type 3 subfamily. In terms of assembly, homodimer.

It is found in the cytoplasm. It catalyses the reaction tRNA(Tyr) + L-tyrosine + ATP = L-tyrosyl-tRNA(Tyr) + AMP + diphosphate + H(+). Catalyzes the attachment of tyrosine to tRNA(Tyr) in a two-step reaction: tyrosine is first activated by ATP to form Tyr-AMP and then transferred to the acceptor end of tRNA(Tyr). The polypeptide is Tyrosine--tRNA ligase (tyrS) (Methanocaldococcus jannaschii (strain ATCC 43067 / DSM 2661 / JAL-1 / JCM 10045 / NBRC 100440) (Methanococcus jannaschii)).